Here is a 689-residue protein sequence, read N- to C-terminus: Glycine--tRNA ligase beta subunit (689 aa).

It belongs to the class-II aminoacyl-tRNA synthetase family. In terms of assembly, tetramer of two alpha and two beta subunits.

It localises to the cytoplasm. The catalysed reaction is tRNA(Gly) + glycine + ATP = glycyl-tRNA(Gly) + AMP + diphosphate. This is Glycine--tRNA ligase beta subunit from Mannheimia succiniciproducens (strain KCTC 0769BP / MBEL55E).